A 274-amino-acid polypeptide reads, in one-letter code: 4-deoxy-L-threo-5-hexosulose-uronate ketol-isomerase (274 aa).

Zn(2+) is bound by residues H192, H194, E199, and H241.

The protein belongs to the KduI family. Requires Zn(2+) as cofactor.

It carries out the reaction 5-dehydro-4-deoxy-D-glucuronate = 3-deoxy-D-glycero-2,5-hexodiulosonate. The protein operates within glycan metabolism; pectin degradation; 2-dehydro-3-deoxy-D-gluconate from pectin: step 4/5. Its function is as follows. Catalyzes the isomerization of 5-dehydro-4-deoxy-D-glucuronate to 3-deoxy-D-glycero-2,5-hexodiulosonate. This Shigella boydii serotype 18 (strain CDC 3083-94 / BS512) protein is 4-deoxy-L-threo-5-hexosulose-uronate ketol-isomerase.